A 983-amino-acid polypeptide reads, in one-letter code: Ephrin type-A receptor 3 (983 aa).

The first 19 residues, methionine 1–glycine 19, serve as a signal peptide directing secretion. At arginine 20 to glutamine 540 the chain is on the extracellular side. The Eph LBD domain occupies glutamate 28–lysine 206. Residues asparagine 231, asparagine 336, asparagine 390, asparagine 403, and asparagine 492 are each glycosylated (N-linked (GlcNAc...) asparagine). Fibronectin type-III domains follow at residues proline 324–alanine 434 and alanine 435–aspartate 530. Residues valine 541–glycine 564 traverse the membrane as a helical segment. The Cytoplasmic segment spans residues arginine 565–valine 983. Residues tyrosine 596 and tyrosine 602 each carry the phosphotyrosine; by autocatalysis modification. The Protein kinase domain maps to isoleucine 621 to isoleucine 882. ATP is bound by residues glycine 628–glycine 633, lysine 653, and glutamate 700–serine 706. Position 701 is a phosphotyrosine; by autocatalysis (tyrosine 701). Catalysis depends on aspartate 746, which acts as the Proton acceptor. Arginine 750–asparagine 751 contributes to the ATP binding site. Tyrosine 779 carries the phosphotyrosine; by autocatalysis modification. The region spanning serine 911–histidine 975 is the SAM domain. The PDZ-binding signature appears at valine 981–valine 983.

The protein belongs to the protein kinase superfamily. Tyr protein kinase family. Ephrin receptor subfamily. In terms of assembly, heterotetramer upon binding of the ligand. The heterotetramer is composed of an ephrin dimer and a receptor dimer. Oligomerization is probably required to induce biological responses. In terms of processing, autophosphorylates upon activation by EFNA5. As to expression, highly expressed in the developing brain and embryonic tissues. In adult, the greatest levels of expression occur in the brain. It is expressed in a graded manner across the retina with the highest expression at its temporal pole. Detectable in all other adult tissues examined, except the liver.

The protein localises to the cell membrane. The enzyme catalyses L-tyrosyl-[protein] + ATP = O-phospho-L-tyrosyl-[protein] + ADP + H(+). Its function is as follows. Receptor tyrosine kinase which binds promiscuously membrane-bound ephrin family ligands residing on adjacent cells, leading to contact-dependent bidirectional signaling into neighboring cells. The signaling pathway downstream of the receptor is referred to as forward signaling while the signaling pathway downstream of the ephrin ligand is referred to as reverse signaling. Highly promiscuous for ephrin-A ligands it binds preferentially EFNA5. Upon activation by EFNA5 regulates cell-cell adhesion, cytoskeletal organization and cell migration. Plays a role in cardiac cells migration and differentiation probably through activation by EFNA1. Involved in the retinotectal mapping of neurons. May also control the segregation but not the guidance of motor and sensory axons during neuromuscular circuit development. The sequence is that of Ephrin type-A receptor 3 (EPHA3) from Gallus gallus (Chicken).